The primary structure comprises 588 residues: Catechol oxidase B, chloroplastic (588 aa).

Residues 1–88 (SSSSTTTIPL…AANLAPLASA (88 aa)) constitute a chloroplast transit peptide. Intrachain disulfides connect Cys99–Cys115 and Cys114–Cys181. Cu cation contacts are provided by His180, His198, His207, His329, His333, and His364. Positions 184–198 (CNGAYKVGGKELQVH) form a cross-link, 2'-(S-cysteinyl)-histidine (Cys-His).

It belongs to the tyrosinase family. The cofactor is Cu(2+).

Its subcellular location is the plastid. It localises to the chloroplast thylakoid lumen. The enzyme catalyses 2 catechol + O2 = 2 1,2-benzoquinone + 2 H2O. Its function is as follows. Catalyzes the oxidation of mono- and o-diphenols to o-diquinones. This Solanum tuberosum (Potato) protein is Catechol oxidase B, chloroplastic.